The following is a 245-amino-acid chain: Ribosomal RNA small subunit methyltransferase G (245 aa).

Residues Gly-90, Leu-95, 140 to 141 (AE), and Arg-158 contribute to the S-adenosyl-L-methionine site. Residues 223-245 (VVSARRAKPPHPKSARTGKAGTR) form a disordered region. Basic residues predominate over residues 227–245 (RRAKPPHPKSARTGKAGTR).

Belongs to the methyltransferase superfamily. RNA methyltransferase RsmG family.

It is found in the cytoplasm. Specifically methylates the N7 position of guanine in position 518 of 16S rRNA. This chain is Ribosomal RNA small subunit methyltransferase G, found in Mycobacterium avium (strain 104).